Reading from the N-terminus, the 477-residue chain is Methylenetetrahydrofolate--tRNA-(uracil-5-)-methyltransferase TrmFO (477 aa).

Position 14–19 (14–19 (GGGLAG)) interacts with FAD.

This sequence belongs to the MnmG family. TrmFO subfamily. It depends on FAD as a cofactor.

The protein resides in the cytoplasm. It carries out the reaction uridine(54) in tRNA + (6R)-5,10-methylene-5,6,7,8-tetrahydrofolate + NADH + H(+) = 5-methyluridine(54) in tRNA + (6S)-5,6,7,8-tetrahydrofolate + NAD(+). The catalysed reaction is uridine(54) in tRNA + (6R)-5,10-methylene-5,6,7,8-tetrahydrofolate + NADPH + H(+) = 5-methyluridine(54) in tRNA + (6S)-5,6,7,8-tetrahydrofolate + NADP(+). Catalyzes the folate-dependent formation of 5-methyl-uridine at position 54 (M-5-U54) in all tRNAs. The polypeptide is Methylenetetrahydrofolate--tRNA-(uracil-5-)-methyltransferase TrmFO (Rhizobium johnstonii (strain DSM 114642 / LMG 32736 / 3841) (Rhizobium leguminosarum bv. viciae)).